A 1248-amino-acid polypeptide reads, in one-letter code: von Willebrand factor A domain-containing protein 5B2 (1248 aa).

One can recognise a VIT domain in the interval M1–R138. The interval V184–F204 is disordered. Residues E354 to I527 enclose the VWFA domain. Disordered regions lie at residues P590–T650, S672–C710, A751–Q789, S1008–L1037, and D1126–L1168. Residues S595 to L619 are compositionally biased toward polar residues. 3 stretches are compositionally biased toward low complexity: residues S684 to P701, A751 to A764, and P780 to Q789. Residues S1127 to Q1145 show a composition bias toward low complexity. Basic and acidic residues predominate over residues G1159–L1168.

This Mus musculus (Mouse) protein is von Willebrand factor A domain-containing protein 5B2 (Vwa5b2).